Consider the following 79-residue polypeptide: Conotoxin Vi6.3 (79 aa).

An N-terminal signal peptide occupies residues 1-22 (MKLTCVLIITVLFLTASQLITA). The propeptide occupies 23-47 (DYSRDQRQYRAVRLGDEMRNFKGAR). 3 disulfide bridges follow: Cys49–Cys62, Cys56–Cys67, and Cys61–Cys77. 4-hydroxyproline occurs at positions 60 and 63.

Belongs to the conotoxin O1 superfamily. Expressed by the venom duct.

The protein resides in the secreted. Its function is as follows. Ion channel inhibitor that inhibits the increase in intracellular calcium upon depolarization in DRG neurons. In vivo, both intraperitoneal and intracranial injections into mice induce hyperactivity. The protein is Conotoxin Vi6.3 of Conus virgo (Virgin cone).